The chain runs to 266 residues: Type III pantothenate kinase (266 aa).

6-13 contacts ATP; the sequence is DAGNTNIV. 107–110 contacts substrate; the sequence is GADR. The Proton acceptor role is filled by Asp-109. Asp-129 contacts K(+). Thr-132 serves as a coordination point for ATP. Residue Thr-184 coordinates substrate.

Belongs to the type III pantothenate kinase family. Homodimer. It depends on NH4(+) as a cofactor. The cofactor is K(+).

Its subcellular location is the cytoplasm. The catalysed reaction is (R)-pantothenate + ATP = (R)-4'-phosphopantothenate + ADP + H(+). The protein operates within cofactor biosynthesis; coenzyme A biosynthesis; CoA from (R)-pantothenate: step 1/5. Catalyzes the phosphorylation of pantothenate (Pan), the first step in CoA biosynthesis. This chain is Type III pantothenate kinase, found in Acidiphilium cryptum (strain JF-5).